We begin with the raw amino-acid sequence, 676 residues long: UvrABC system protein B (676 aa).

The Helicase ATP-binding domain occupies 26-414 (EGLENGLAHQ…SDGEIAEQVV (389 aa)). An ATP-binding site is contributed by 39 to 46 (GVTGSGKT). Positions 92 to 115 (YFDYYQPEAYVPTTDTFIEKDSSV) match the Beta-hairpin motif. In terms of domain architecture, Helicase C-terminal spans 432 to 598 (QVDDLLSEIR…ALKKDVADIL (167 aa)). Residues 636 to 671 (EKAIQKLESKMYQHAKDLEFEQAAQVRDEIDNLRKQ) enclose the UVR domain.

This sequence belongs to the UvrB family. In terms of assembly, forms a heterotetramer with UvrA during the search for lesions. Interacts with UvrC in an incision complex.

It is found in the cytoplasm. Its function is as follows. The UvrABC repair system catalyzes the recognition and processing of DNA lesions. A damage recognition complex composed of 2 UvrA and 2 UvrB subunits scans DNA for abnormalities. Upon binding of the UvrA(2)B(2) complex to a putative damaged site, the DNA wraps around one UvrB monomer. DNA wrap is dependent on ATP binding by UvrB and probably causes local melting of the DNA helix, facilitating insertion of UvrB beta-hairpin between the DNA strands. Then UvrB probes one DNA strand for the presence of a lesion. If a lesion is found the UvrA subunits dissociate and the UvrB-DNA preincision complex is formed. This complex is subsequently bound by UvrC and the second UvrB is released. If no lesion is found, the DNA wraps around the other UvrB subunit that will check the other stand for damage. The sequence is that of UvrABC system protein B from Aliivibrio fischeri (strain ATCC 700601 / ES114) (Vibrio fischeri).